The chain runs to 386 residues: Ribonuclease D (386 aa).

The 172-residue stretch at 3–174 (HTITTTDELA…EIYEYLSAEL (172 aa)) folds into the 3'-5' exonuclease domain. The 82-residue stretch at 213 to 294 (SGRVVAIAQQ…ARGMSVPNSE (82 aa)) folds into the HRDC domain.

This sequence belongs to the RNase D family. A divalent metal cation serves as cofactor.

The protein resides in the cytoplasm. The enzyme catalyses Exonucleolytic cleavage that removes extra residues from the 3'-terminus of tRNA to produce 5'-mononucleotides.. In terms of biological role, exonuclease involved in the 3' processing of various precursor tRNAs. Initiates hydrolysis at the 3'-terminus of an RNA molecule and releases 5'-mononucleotides. The polypeptide is Ribonuclease D (Jannaschia sp. (strain CCS1)).